A 208-amino-acid polypeptide reads, in one-letter code: Small ribosomal subunit protein uS4 (208 aa).

The S4 RNA-binding domain occupies 98-160; that stretch reads RRLDNVVYRL…SKSKTRFVEI (63 aa).

The protein belongs to the universal ribosomal protein uS4 family. Part of the 30S ribosomal subunit. Contacts protein S5. The interaction surface between S4 and S5 is involved in control of translational fidelity.

In terms of biological role, one of the primary rRNA binding proteins, it binds directly to 16S rRNA where it nucleates assembly of the body of the 30S subunit. Its function is as follows. With S5 and S12 plays an important role in translational accuracy. In Caldicellulosiruptor bescii (strain ATCC BAA-1888 / DSM 6725 / KCTC 15123 / Z-1320) (Anaerocellum thermophilum), this protein is Small ribosomal subunit protein uS4.